Reading from the N-terminus, the 373-residue chain is Filamin-binding LIM protein 1 (373 aa).

Residues 1–70 (MASKPEKRVA…SPWTTPGRAA (70 aa)) are filamin-binding. Disordered regions lie at residues 41–119 (RPWE…PSEE) and 135–176 (QLHL…PVEK). Residues 104-114 (LPPPPPPPPVL) show a composition bias toward pro residues. LIM zinc-binding domains are found at residues 181 to 242 (DICA…TLER), 243 to 300 (CGKC…RKFA), and 301 to 370 (PVCS…RSAA). Residues 276-373 (IGDESFALGS…HVKRSAAGCC (98 aa)) form an FERMT2-binding region.

Interacts with NKX2-5. Isoform 1 and isoform 3 interact with FERMT2, FLNA, FLNB and FLNC. Isoform 2 interacts with FLNB. Isoform 1 and isoform 3 are expressed in heart, kidney, lung, pancreas, placenta and platelets. Isoform 2 is expressed in brain, heart, kidney, lung, pancreas, placenta, skeletal muscle and platelets.

Its subcellular location is the cell junction. It is found in the focal adhesion. It localises to the cytoplasm. The protein localises to the cytoskeleton. The protein resides in the stress fiber. Its function is as follows. Serves as an anchoring site for cell-ECM adhesion proteins and filamin-containing actin filaments. Is implicated in cell shape modulation (spreading) and motility. May participate in the regulation of filamin-mediated cross-linking and stabilization of actin filaments. May also regulate the assembly of filamin-containing signaling complexes that control actin assembly. Promotes dissociation of FLNA from ITGB3 and ITGB7. Promotes activation of integrins and regulates integrin-mediated cell-cell adhesion. The polypeptide is Filamin-binding LIM protein 1 (FBLIM1) (Homo sapiens (Human)).